The following is a 359-amino-acid chain: Dihydroorotate dehydrogenase (quinone) (359 aa).

Residues 68 to 72 (AGFDK) and Thr-92 contribute to the FMN site. Substrate is bound at residue Lys-72. Residue 117–121 (NRMGF) coordinates substrate. 2 residues coordinate FMN: Asn-145 and Asn-176. Asn-176 contributes to the substrate binding site. Ser-179 functions as the Nucleophile in the catalytic mechanism. Asn-181 serves as a coordination point for substrate. Positions 212 and 240 each coordinate FMN. Position 241–242 (241–242 (NT)) interacts with substrate. FMN is bound by residues Gly-266, Gly-295, and 316 to 317 (YT).

Belongs to the dihydroorotate dehydrogenase family. Type 2 subfamily. Monomer. The cofactor is FMN.

Its subcellular location is the cell membrane. The catalysed reaction is (S)-dihydroorotate + a quinone = orotate + a quinol. It functions in the pathway pyrimidine metabolism; UMP biosynthesis via de novo pathway; orotate from (S)-dihydroorotate (quinone route): step 1/1. Catalyzes the conversion of dihydroorotate to orotate with quinone as electron acceptor. This is Dihydroorotate dehydrogenase (quinone) from Corynebacterium striatum.